Here is a 57-residue protein sequence, read N- to C-terminus: uncharacterized protein (57 aa).

The chain crosses the membrane as a helical span at residues L24 to I44.

To cation A.eutrophus efflux system protein CzcD.

The protein localises to the cell membrane. This is an uncharacterized protein from Bacillus caldolyticus.